The sequence spans 314 residues: MAAALSQGGTAITMKALLEAGVHFGHQTKRWNPKMKPFIFGARNGIYIIDLQKTVGLARNALRFVSDSVAKGGSVLFVGTKKQAQDAIREEASRSGQFFVTNRWLGGTLTNFKTVKQGIDRLKTIEKMAADGTYERLPKKEVAQLEREREKLEKNLGGIKELSRLPSALFVIDTKKEHIAVHEANRLGIPVVAVVDTNCDPEGIDYVIPGNDDAIRSIRLFTGKVAEACIEGKGRYSAWVAEHGGHDERREQEDRDAASERGHKDRRDRRDRRGGPRERREPREDRAAASANVEVVRKGEVAPAAAPEAAPAKE.

2 stretches are compositionally biased toward basic and acidic residues: residues Gly244–Asp265 and Asp271–Ala287. Residues Gly244–Glu314 are disordered. Low complexity predominate over residues Ala302 to Glu314.

It belongs to the universal ribosomal protein uS2 family.

The sequence is that of Small ribosomal subunit protein uS2 from Anaeromyxobacter dehalogenans (strain 2CP-C).